Consider the following 369-residue polypeptide: Phenylalanine--tRNA ligase alpha subunit (369 aa).

Glutamate 269 is a Mg(2+) binding site.

This sequence belongs to the class-II aminoacyl-tRNA synthetase family. Phe-tRNA synthetase alpha subunit type 1 subfamily. In terms of assembly, tetramer of two alpha and two beta subunits. The cofactor is Mg(2+).

It localises to the cytoplasm. It carries out the reaction tRNA(Phe) + L-phenylalanine + ATP = L-phenylalanyl-tRNA(Phe) + AMP + diphosphate + H(+). This chain is Phenylalanine--tRNA ligase alpha subunit, found in Brucella anthropi (strain ATCC 49188 / DSM 6882 / CCUG 24695 / JCM 21032 / LMG 3331 / NBRC 15819 / NCTC 12168 / Alc 37) (Ochrobactrum anthropi).